Consider the following 520-residue polypeptide: Nonsense-mediated mRNA decay factor SMG9 (520 aa).

Disordered regions lie at residues 1-94 (MSES…PAPL), 108-143 (KGPV…QRPT), and 341-360 (KPST…SDEG). At Ser-2 the chain carries N-acetylserine. A phosphoserine mark is found at Ser-2, Ser-4, Ser-7, Ser-32, and Ser-53. Over residues 36 to 53 (GRERDYIAPWERERRDAS) the composition is skewed to basic and acidic residues. Composition is skewed to pro residues over residues 78–94 (QPPP…PAPL) and 122–133 (TAPPPPAAPAPP). Over residues 342-357 (PSTPSPSHESSSSSGS) the composition is skewed to low complexity. Residue Ser-451 is modified to Phosphoserine.

This sequence belongs to the SMG9 family. As to quaternary structure, self-associates to form homodimers and forms heterodimers with SMG8; these assembly forms may represent SMG1C intermediate forms. Component of the SMG1C complex composed of SMG1, SMG8 and SMG9. Interacts with DHX34; the interaction is RNA-independent. In terms of processing, phosphorylated by SMG1.

Involved in nonsense-mediated decay (NMD) of mRNAs containing premature stop codons. Is recruited by release factors to stalled ribosomes together with SMG1 and SMG8 (forming the SMG1C protein kinase complex) and, in the SMG1C complex, is required for the efficient association between SMG1 and SMG8. Plays a role in brain, heart, and eye development. This chain is Nonsense-mediated mRNA decay factor SMG9, found in Homo sapiens (Human).